The primary structure comprises 372 residues: Neuropeptide S receptor (372 aa).

Residues 1-52 lie on the Extracellular side of the membrane; sequence MPANLTEGSFHANQTVPMLDSSPVACTEIVTFTEALEAEEWGSFYSSFKTEQ. N-linked (GlcNAc...) asparagine glycosylation is found at Asn4 and Asn13. The chain crosses the membrane as a helical span at residues 53 to 73; it reads LITLWVLFVFTIVGNSVVLFS. The Cytoplasmic segment spans residues 74–82; sequence TWRRKRKSR. The chain crosses the membrane as a helical span at residues 83–103; that stretch reads MTFFVTQLAITDSFTGLINIL. The Extracellular portion of the chain corresponds to 104–122; it reads TDIIWRFTGDFMAPDLVCR. A disulfide bridge links Cys121 with Cys198. The helical transmembrane segment at 123-143 threads the bilayer; that stretch reads IVRYLQVVLLYASTYVLVSLS. Residues 144-165 lie on the Cytoplasmic side of the membrane; the sequence is IDRYHAIVYPMKFLQGAEKQAK. The chain crosses the membrane as a helical span at residues 166–186; that stretch reads VLIGIAWSLSFLFSIPTLIIF. The Extracellular portion of the chain corresponds to 187–213; sequence GKRTLSNGEVQCWALWPDDSYWTPYMT. The helical transmembrane segment at 214-234 threads the bilayer; the sequence is IVAFLVYFIPLTIISVIYGLV. Residues 235 to 276 lie on the Cytoplasmic side of the membrane; the sequence is IRTIWIKSKAHETVISNCSDGELCCSYNRGLISKAKIKAIKY. The helical transmembrane segment at 277-297 threads the bilayer; that stretch reads SIVIILAFICCWSPYFLFDML. The Extracellular segment spans residues 298–313; the sequence is DNFNLLPDTKERFYAS. Residues 314–334 traverse the membrane as a helical segment; the sequence is VIIQNLPALNSAINPLIYCIF. At 335-372 the chain is on the cytoplasmic side; that stretch reads SGSLCSPCKVQRSQDSRMTYRERSERHEMQILSKPEFI.

The protein belongs to the G-protein coupled receptor 1 family. Vasopressin/oxytocin receptor subfamily.

Its subcellular location is the cell membrane. G-protein coupled receptor for neuropeptide S (NPS). Promotes mobilization of intracellular Ca(2+) stores. Inhibits cell growth in response to NPS binding. Involved in pathogenesis of asthma and other IgE-mediated diseases. The chain is Neuropeptide S receptor (Npsr1) from Rattus norvegicus (Rat).